The primary structure comprises 55 residues: Large ribosomal subunit protein bL33 (55 aa).

This sequence belongs to the bacterial ribosomal protein bL33 family.

The protein is Large ribosomal subunit protein bL33 of Paraburkholderia phytofirmans (strain DSM 17436 / LMG 22146 / PsJN) (Burkholderia phytofirmans).